Here is a 398-residue protein sequence, read N- to C-terminus: L-talarate/galactarate dehydratase (398 aa).

Substrate-binding positions include 46–48 (DAK), 82–83 (KR), and K195. K197 (proton acceptor) is an active-site residue. D226 is a binding site for Mg(2+). N228 lines the substrate pocket. E252 and E278 together coordinate Mg(2+). Residue H328 is the Proton donor/acceptor of the active site. E348 contacts substrate.

Belongs to the mandelate racemase/muconate lactonizing enzyme family. In terms of assembly, homooctamer; tetramer of dimers. It depends on Mg(2+) as a cofactor.

The enzyme catalyses L-altrarate = 5-dehydro-4-deoxy-D-glucarate + H2O. It carries out the reaction galactarate = 5-dehydro-4-deoxy-D-glucarate + H2O. It catalyses the reaction L-altrarate = galactarate. Its activity is regulated as follows. Competitively inhibited by tartronate. Its function is as follows. Catalyzes the efficient dehydration of both L-talarate (also called L-altrarate) and galactarate to 5-keto-4-deoxy-D-glucarate (5-KDG). Also catalyzes the epimerization of L-talarate to galactarate; epimerization occurs in competition with dehydration. Is required for the utilization of L-talarate as a carbon source. Also functions in galactarate utilization. Is not active on other acid sugars. This chain is L-talarate/galactarate dehydratase, found in Salmonella typhimurium (strain LT2 / SGSC1412 / ATCC 700720).